The sequence spans 326 residues: Light-induced protein, chloroplastic (326 aa).

The transit peptide at 1 to 63 (MASISSLNQI…TNPKPKFTAQ (63 aa)) directs the protein to the chloroplast.

The protein belongs to the LIPC family. In terms of assembly, associates with the major light-harvesting antenna complex polypeptides of the PSII oxygen-evolving complex. In terms of tissue distribution, expressed in leaves.

The protein resides in the plastid. It is found in the chloroplast thylakoid membrane. Functionally, required for normal plant growth. May be both photoprotective and play an ancillary role in photosynthesis. May structurally stabilize thylakoids during osmotic and oxidative stress. This is Light-induced protein, chloroplastic from Solanum tuberosum (Potato).